Consider the following 862-residue polypeptide: DNA mismatch repair protein MutS (862 aa).

604–611 (GPNMAGKS) contacts ATP.

Belongs to the DNA mismatch repair MutS family.

This protein is involved in the repair of mismatches in DNA. It is possible that it carries out the mismatch recognition step. This protein has a weak ATPase activity. This is DNA mismatch repair protein MutS from Brevibacillus brevis (strain 47 / JCM 6285 / NBRC 100599).